A 393-amino-acid chain; its full sequence is Alpha-pyrone synthesis polyketide synthase-like Pks18 (393 aa).

The interval 1 to 26 (MNVSAESGAPRRAGQRHEVGLAQLPP) is disordered. Catalysis depends on C175, which acts as the Nucleophile. H221 contacts substrate.

It belongs to the thiolase-like superfamily. Chalcone/stilbene synthases family. As to quaternary structure, homodimer.

It functions in the pathway lipid metabolism; fatty acid biosynthesis. Involved in the biosynthesis of tri- and tetraketide alpha-pyrones. Pks18 catalyzes the extension of medium- and long-chain aliphatic acyl-CoA substrates by using malonyl-CoA as an extender molecule to synthesize polyketide products. This chain is Alpha-pyrone synthesis polyketide synthase-like Pks18 (pks18), found in Mycobacterium bovis (strain ATCC BAA-935 / AF2122/97).